Here is a 663-residue protein sequence, read N- to C-terminus: Transmembrane 9 superfamily member 2 (663 aa).

Residues 1–28 (MSARLPVLSPPRWPRLLLLSLLLLGAVP) form the signal peptide. Over 29 to 300 (GPRRSGGFYL…LESMPHTHIQ (272 aa)) the chain is Lumenal. The helical transmembrane segment at 301–321 (WFSIMNSLVIVLFLSGMVAMI) threads the bilayer. At 322 to 374 (MLRTLHKDIARYNQMDSTEDAQEEFGWKLVHGDIFRPPRKGMLLSVFLGSGTQ) the chain is on the cytoplasmic side. A helical transmembrane segment spans residues 375–395 (ILIMTFVTLFFACLGFLSPAN). Over 396-398 (RGA) the chain is Lumenal. A helical transmembrane segment spans residues 399 to 419 (LMTCAVVLWVLLGTPAGYVAA). Topologically, residues 420–437 (RFYKSFGGEKWKTNVLLT) are cytoplasmic. A helical membrane pass occupies residues 438-458 (SFLCPGIVFADFFIMNLILWG). The Lumenal segment spans residues 459-466 (EGSSAAIP). A helical transmembrane segment spans residues 467 to 487 (FGTLVAILALWFCISVPLTFI). The Cytoplasmic segment spans residues 488–522 (GAYFGFKKNAIEHPVRTNQIPRQIPEQSFYTKPLP). Residues 523–543 (GIIMGGILPFGCIFIQLFFIL) traverse the membrane as a helical segment. The Lumenal portion of the chain corresponds to 544–554 (NSIWSHQMYYM). The chain crosses the membrane as a helical span at residues 555-575 (FGFLFLVFIILVITCSEATIL). Residues 576 to 591 (LCYFHLCAEDYHWQWR) are Cytoplasmic-facing. A helical membrane pass occupies residues 592 to 612 (SFLTSGFTAVYFLIYAVHYFF). The Lumenal segment spans residues 613–631 (SKLQITGTASTILYFGYTM). A helical transmembrane segment spans residues 632–652 (IMVLIFFLFTGTIGFFACFWF). The Cytoplasmic segment spans residues 653–663 (VTKIYSVVKVD).

The protein belongs to the nonaspanin (TM9SF) (TC 9.A.2) family.

It localises to the endosome membrane. Its subcellular location is the golgi outpost. It is found in the cytoplasm. The protein resides in the cytoskeleton. The protein localises to the microtubule organizing center. Its function is as follows. In the intracellular compartments, may function as a channel or small molecule transporter. The protein is Transmembrane 9 superfamily member 2 (TM9SF2) of Pongo abelii (Sumatran orangutan).